The primary structure comprises 424 residues: MVFVACGLNHKTAPIHVREKVALQPAMQDSLLSSLLDLPEVNEAAILSTCNRTEIYCDTNTPEVLGNWLAHEHQLSEELLSQFLYIHQGKEGIKHTLRVASGLDSMMIGEPQILGQMKQAYQHACRLGTVKTQLRPVFEYIFRASKRIRTRSGIGANPVSIAYAAVQLIGQLFKNYHSLSVFLIGSGETASLVAKYLHQHGVHRFLIASRTLENAQKLAETFGGKTLSIGDIPQYLPLADVVISATACPLPFINKSLVEHALEQRNHAPMFLLDLAVPRDIEGNVNELEQVHLYNVDDLQSMIEKGMNERRNAALQAEQLIESELDNYIRWHRSLRAKDVICDYRNQMHTLAQQELQRALKKISAGQNQQDVLNEFSMRLVNKLTHNPTIGLRQIAWDNREDLLDLARYLFDTTANQSLYEEIS.

Substrate-binding positions include 49-52, Ser-105, 110-112, and Gln-116; these read TCNR and EPQ. Residue Cys-50 is the Nucleophile of the active site. 185 to 190 serves as a coordination point for NADP(+); the sequence is GSGETA.

It belongs to the glutamyl-tRNA reductase family. As to quaternary structure, homodimer.

The catalysed reaction is (S)-4-amino-5-oxopentanoate + tRNA(Glu) + NADP(+) = L-glutamyl-tRNA(Glu) + NADPH + H(+). It participates in porphyrin-containing compound metabolism; protoporphyrin-IX biosynthesis; 5-aminolevulinate from L-glutamyl-tRNA(Glu): step 1/2. In terms of biological role, catalyzes the NADPH-dependent reduction of glutamyl-tRNA(Glu) to glutamate 1-semialdehyde (GSA). The sequence is that of Glutamyl-tRNA reductase from Legionella pneumophila (strain Corby).